Here is a 251-residue protein sequence, read N- to C-terminus: MIFHKIYENKLLRSVRKGAIPHHIAIIMDGNRRFARKKGLEPHEGHFFGSKKAEEVLEWCWDLGVKMLTLYAFSTENFRRSEKEKKNIFQLLESELRRLLKDRRTYERELRVKVVGKRELLPENLRETIKEVEERTKKHRRHYLNVAVAYGGRQEIIDAVRAILRKVRKGEVRPEEIDEKMLEEHLYGEGRYSKVDLIIRTGGEQRLSNFLPWQAANSVAYFCDVYWPEFRKIDLLRAIRAWQYRKSHEVV.

The active site involves Asp-29. Position 29 (Asp-29) interacts with Mg(2+). Residues 30–33 (GNRR), Phe-34, His-46, and 74–76 (STE) each bind substrate. The Proton acceptor role is filled by Asn-77. Substrate contacts are provided by residues Phe-78, Arg-80, Arg-200, and 206–208 (RLS).

The protein belongs to the UPP synthase family. As to quaternary structure, homodimer. Mg(2+) is required as a cofactor.

The catalysed reaction is geranylgeranyl diphosphate + 7 isopentenyl diphosphate = tri-trans,hepta-cis-undecaprenyl diphosphate + 7 diphosphate. In terms of biological role, catalyzes the sequential condensation of isopentenyl diphosphate (IPP) with geranylgeranyl diphosphate (GGPP) to yield (2Z,6Z,10Z,14Z,18Z,22Z,26Z,30E,34E,38E)-undecaprenyl diphosphate (tritrans,heptacis-UPP). It is probably the precursor of glycosyl carrier lipids. In Archaeoglobus fulgidus (strain ATCC 49558 / DSM 4304 / JCM 9628 / NBRC 100126 / VC-16), this protein is Tritrans,polycis-undecaprenyl-diphosphate synthase (geranylgeranyl-diphosphate specific).